Consider the following 88-residue polypeptide: ATP synthase F(0) complex subunit f, mitochondrial (88 aa).

Residue alanine 2 is modified to N-acetylalanine. Serine 3 carries the post-translational modification Phosphoserine. Lysine 16 carries the post-translational modification N6-acetyllysine. Residues 62–79 (MVLAAYVVFNYCRSYKEL) traverse the membrane as a helical segment.

This sequence belongs to the ATPase F chain family. In terms of assembly, component of the ATP synthase complex composed at least of ATP5F1A/subunit alpha, ATP5F1B/subunit beta, ATP5MC1/subunit c (homooctomer), MT-ATP6/subunit a, MT-ATP8/subunit 8, ATP5ME/subunit e, ATP5MF/subunit f, ATP5MG/subunit g, ATP5MK/subunit k, ATP5MJ/subunit j, ATP5F1C/subunit gamma, ATP5F1D/subunit delta, ATP5F1E/subunit epsilon, ATP5PF/subunit F6, ATP5PB/subunit b, ATP5PD/subunit d, ATP5PO/subunit OSCP. ATP synthase complex consists of a soluble F(1) head domain (subunits alpha(3) and beta(3)) - the catalytic core - and a membrane F(0) domain - the membrane proton channel (subunits c, a, 8, e, f, g, k and j). These two domains are linked by a central stalk (subunits gamma, delta, and epsilon) rotating inside the F1 region and a stationary peripheral stalk (subunits F6, b, d, and OSCP).

The protein localises to the mitochondrion. It localises to the mitochondrion inner membrane. Its function is as follows. Subunit f, of the mitochondrial membrane ATP synthase complex (F(1)F(0) ATP synthase or Complex V) that produces ATP from ADP in the presence of a proton gradient across the membrane which is generated by electron transport complexes of the respiratory chain. ATP synthase complex consist of a soluble F(1) head domain - the catalytic core - and a membrane F(1) domain - the membrane proton channel. These two domains are linked by a central stalk rotating inside the F(1) region and a stationary peripheral stalk. During catalysis, ATP synthesis in the catalytic domain of F(1) is coupled via a rotary mechanism of the central stalk subunits to proton translocation. In vivo, can only synthesize ATP although its ATP hydrolase activity can be activated artificially in vitro. Part of the complex F(0) domain. The protein is ATP synthase F(0) complex subunit f, mitochondrial of Sus scrofa (Pig).